Consider the following 159-residue polypeptide: Probable minor fimbrial protein (159 aa).

A propeptide spans 1-6 (MKKMHG) (leader sequence). Phe7 bears the N-methylphenylalanine mark. A helical transmembrane segment spans residues 7-29 (FTLIELMIVVAIIGVLASIALMQ). Intrachain disulfides connect Cys56/Cys71 and Cys140/Cys153.

The protein belongs to the N-Me-Phe pilin family. As to quaternary structure, the pili are polar flexible filaments of about 5.4 nanometers diameter and 2.5 micrometers average length; they consist of only a single polypeptide chain arranged in a helical configuration of five subunits per turn in the assembled pilus.

The protein resides in the fimbrium. Its subcellular location is the membrane. The sequence is that of Probable minor fimbrial protein (fimZ) from Dichelobacter nodosus (Bacteroides nodosus).